The primary structure comprises 342 residues: Ketol-acid reductoisomerase (NADP(+)) (342 aa).

A KARI N-terminal Rossmann domain is found at 2-181; sequence VKVYYNGDIK…GGARAGVLET (180 aa). NADP(+) is bound by residues 25–28, R48, S52, and 82–85; these read YGSQ and DEQQ. The active site involves H107. G133 contacts NADP(+). One can recognise a KARI C-terminal knotted domain in the interval 182-327; that stretch reads TFKEETETDL…RKLREMMPFV (146 aa). Mg(2+) is bound by residues D190, E194, E226, and E230. S251 provides a ligand contact to substrate.

This sequence belongs to the ketol-acid reductoisomerase family. It depends on Mg(2+) as a cofactor.

It catalyses the reaction (2R)-2,3-dihydroxy-3-methylbutanoate + NADP(+) = (2S)-2-acetolactate + NADPH + H(+). It carries out the reaction (2R,3R)-2,3-dihydroxy-3-methylpentanoate + NADP(+) = (S)-2-ethyl-2-hydroxy-3-oxobutanoate + NADPH + H(+). Its pathway is amino-acid biosynthesis; L-isoleucine biosynthesis; L-isoleucine from 2-oxobutanoate: step 2/4. It participates in amino-acid biosynthesis; L-valine biosynthesis; L-valine from pyruvate: step 2/4. Functionally, involved in the biosynthesis of branched-chain amino acids (BCAA). Catalyzes an alkyl-migration followed by a ketol-acid reduction of (S)-2-acetolactate (S2AL) to yield (R)-2,3-dihydroxy-isovalerate. In the isomerase reaction, S2AL is rearranged via a Mg-dependent methyl migration to produce 3-hydroxy-3-methyl-2-ketobutyrate (HMKB). In the reductase reaction, this 2-ketoacid undergoes a metal-dependent reduction by NADPH to yield (R)-2,3-dihydroxy-isovalerate. The protein is Ketol-acid reductoisomerase (NADP(+)) of Bacillus subtilis (strain 168).